Reading from the N-terminus, the 122-residue chain is UPF0102 protein DIP1513 (122 aa).

This sequence belongs to the UPF0102 family.

This Corynebacterium diphtheriae (strain ATCC 700971 / NCTC 13129 / Biotype gravis) protein is UPF0102 protein DIP1513.